Consider the following 537-residue polypeptide: Syncytin-2 (537 aa).

Positions 1-15 (MGLLLLVLILTPLLA) are cleaved as a signal peptide. Residues 16–478 (AYRHPDFPLL…GWLNWEGTWK (463 aa)) are Extracellular-facing. The short motif at 43-46 (CWLC) is the CXXC element. Intrachain disulfides connect C43-C46, C43-C439, and C431-C438. N-linked (GlcNAc...) asparagine glycosylation is found at N133, N146, N177, N220, N241, N247, N312, and N332. A fusion peptide region spans residues 354–374 (FIPLLAGLGILAGTGTGIAGI). A CKS-17 motif is present at residues 414 to 430 (LQNRRGLDMLTAAQGGI). A CX6CC motif is present at residues 431 to 439 (CLALDEKCC). N-linked (GlcNAc...) asparagine glycosylation is present at N443. The chain crosses the membrane as a helical span at residues 479–499 (WFSWVLPFIGPLVSLLLLLLF). The Cytoplasmic portion of the chain corresponds to 500-537 (GPCLLNLITQFVSSRLQAIKLQTNGAGCRPRNIQESPF).

Belongs to the gamma type-C retroviral envelope protein family. HERV class-I FRD env subfamily. The surface and transmembrane proteins form a heterodimer. They are attached by non-covalent interactions or by a labile interchain disulfide bond. Specific enzymatic cleavages in vivo yield the mature SU and TM proteins. Post-translationally, the CXXC motif is highly conserved across a broad range of retroviral envelope proteins. It is thought to participate in the formation of a labile disulfide bond possibly with the CX6CC motif present in the transmembrane protein.

It is found in the virion. The protein resides in the cell membrane. In terms of biological role, this endogenous retroviral envelope protein has retained its original fusogenic properties and participates in trophoblast fusion and the formation of a syncytium during placenta morphogenesis. The interaction with MFSD2A is apparently important for this process. Its function is as follows. Endogenous envelope proteins may have kept, lost or modified their original function during evolution but this one can still make pseudotypes with MLV, HIV-1 or SIV-1 virions and confer infectivity. Retroviral envelope proteins mediate receptor recognition and membrane fusion during early infection. The surface protein mediates receptor recognition, while the transmembrane protein anchors the envelope heterodimer to the viral membrane through one transmembrane domain. The other hydrophobic domain, called fusion peptide, mediates fusion of the viral membrane with the target cell membrane. In Macaca fascicularis (Crab-eating macaque), this protein is Syncytin-2 (ERVFRD-1).